Consider the following 431-residue polypeptide: 23S rRNA (uracil(1939)-C(5))-methyltransferase RlmD (431 aa).

The TRAM domain occupies 10–68 (RVTTRQIITVKVNDLDSFGQGVARHNGKALFIPGLLPEESAEVIITEDKKQFARARVSR). [4Fe-4S] cluster is bound by residues C81, C87, C90, and C161. Residues Q264, F293, N298, E314, N341, and D362 each contribute to the S-adenosyl-L-methionine site. C388 (nucleophile) is an active-site residue.

The protein belongs to the class I-like SAM-binding methyltransferase superfamily. RNA M5U methyltransferase family. RlmD subfamily.

It catalyses the reaction uridine(1939) in 23S rRNA + S-adenosyl-L-methionine = 5-methyluridine(1939) in 23S rRNA + S-adenosyl-L-homocysteine + H(+). In terms of biological role, catalyzes the formation of 5-methyl-uridine at position 1939 (m5U1939) in 23S rRNA. The protein is 23S rRNA (uracil(1939)-C(5))-methyltransferase RlmD of Salmonella paratyphi A (strain ATCC 9150 / SARB42).